Consider the following 595-residue polypeptide: Beta-hexosaminidase 1 (595 aa).

A signal peptide spans 1–20; that stretch reads MRFAYLATLAGSLLAGLAQA. An N-linked (GlcNAc...) asparagine glycan is attached at N313.

Belongs to the glycosyl hydrolase 20 family.

The catalysed reaction is Hydrolysis of terminal non-reducing N-acetyl-D-hexosamine residues in N-acetyl-beta-D-hexosaminides.. In terms of biological role, beta-hexosaminidase that shows a broad substrate specificity. The polypeptide is Beta-hexosaminidase 1 (Coccidioides posadasii (strain RMSCC 757 / Silveira) (Valley fever fungus)).